The primary structure comprises 317 residues: Type II methyltransferase M.NgoBI (317 aa).

Positions 2–302 (YKTIDLFSGI…KICSLLFPAR (301 aa)) constitute an SAM-dependent MTase C5-type domain. C71 is a catalytic residue.

This sequence belongs to the class I-like SAM-binding methyltransferase superfamily. C5-methyltransferase family.

It catalyses the reaction a 2'-deoxycytidine in DNA + S-adenosyl-L-methionine = a 5-methyl-2'-deoxycytidine in DNA + S-adenosyl-L-homocysteine + H(+). Its function is as follows. A methylase, recognizes the double-stranded sequence 5'-RGCGCY-3', methylates C-5 on both strands, and protects the DNA from cleavage by the NgoBI endonuclease. The protein is Type II methyltransferase M.NgoBI (ngoBIM) of Neisseria gonorrhoeae.